The chain runs to 257 residues: Thiazole synthase (257 aa).

Lys99 acts as the Schiff-base intermediate with DXP in catalysis. 1-deoxy-D-xylulose 5-phosphate contacts are provided by residues Gly160, 186-187, and 208-209; these read AG and NT.

It belongs to the ThiG family. In terms of assembly, homotetramer. Forms heterodimers with either ThiH or ThiS.

The protein resides in the cytoplasm. It carries out the reaction [ThiS sulfur-carrier protein]-C-terminal-Gly-aminoethanethioate + 2-iminoacetate + 1-deoxy-D-xylulose 5-phosphate = [ThiS sulfur-carrier protein]-C-terminal Gly-Gly + 2-[(2R,5Z)-2-carboxy-4-methylthiazol-5(2H)-ylidene]ethyl phosphate + 2 H2O + H(+). It functions in the pathway cofactor biosynthesis; thiamine diphosphate biosynthesis. Its function is as follows. Catalyzes the rearrangement of 1-deoxy-D-xylulose 5-phosphate (DXP) to produce the thiazole phosphate moiety of thiamine. Sulfur is provided by the thiocarboxylate moiety of the carrier protein ThiS. In vitro, sulfur can be provided by H(2)S. This chain is Thiazole synthase, found in Thermodesulfovibrio yellowstonii (strain ATCC 51303 / DSM 11347 / YP87).